A 238-amino-acid chain; its full sequence is Lactate utilization protein A (238 aa).

Belongs to the LutA/YkgE family.

Is involved in L-lactate degradation and allows cells to grow with lactate as the sole carbon source. This chain is Lactate utilization protein A, found in Geobacillus sp. (strain WCH70).